The chain runs to 421 residues: Signal recognition particle receptor FtsY (421 aa).

GTP-binding positions include 228 to 235 (GINGAGKT), 309 to 313 (DTAGR), and 373 to 376 (TKLD).

The protein belongs to the GTP-binding SRP family. FtsY subfamily. Part of the signal recognition particle protein translocation system, which is composed of SRP and FtsY. SRP is a ribonucleoprotein composed of Ffh and a 4.5S RNA molecule.

It is found in the cell inner membrane. The protein resides in the cytoplasm. It catalyses the reaction GTP + H2O = GDP + phosphate + H(+). Its function is as follows. Involved in targeting and insertion of nascent membrane proteins into the cytoplasmic membrane. Acts as a receptor for the complex formed by the signal recognition particle (SRP) and the ribosome-nascent chain (RNC). Interaction with SRP-RNC leads to the transfer of the RNC complex to the Sec translocase for insertion into the membrane, the hydrolysis of GTP by both Ffh and FtsY, and the dissociation of the SRP-FtsY complex into the individual components. In Neisseria meningitidis serogroup B (strain ATCC BAA-335 / MC58), this protein is Signal recognition particle receptor FtsY.